The chain runs to 85 residues: U4-theraphotoxin-Hhn1i (85 aa).

A signal peptide spans 1–22 (MKVTLIAILTCAAVLVLHTTAA). Residues 23–48 (EELEAESQLMEVGMPDTELAAVDEER) constitute a propeptide that is removed on maturation. Intrachain disulfides connect C52–C66, C56–C77, and C71–C82.

The protein belongs to the neurotoxin 12 (Hwtx-2) family. 02 (Hwtx-2) subfamily. Expressed by the venom gland.

Its subcellular location is the secreted. Postsynaptic neurotoxin. This chain is U4-theraphotoxin-Hhn1i, found in Cyriopagopus hainanus (Chinese bird spider).